Consider the following 486-residue polypeptide: L-arabinose isomerase (486 aa).

Glutamate 299, glutamate 324, histidine 341, and histidine 440 together coordinate Mn(2+).

The protein belongs to the arabinose isomerase family. The cofactor is Mn(2+).

The enzyme catalyses beta-L-arabinopyranose = L-ribulose. It functions in the pathway carbohydrate degradation; L-arabinose degradation via L-ribulose; D-xylulose 5-phosphate from L-arabinose (bacterial route): step 1/3. Catalyzes the conversion of L-arabinose to L-ribulose. This chain is L-arabinose isomerase, found in Shouchella clausii (strain KSM-K16) (Alkalihalobacillus clausii).